A 3364-amino-acid chain; its full sequence is Salivary gland surface protein 1 (3364 aa).

Beta-propeller stretches follow at residues 1 to 344 (MLRI…VVDA) and 705 to 1216 (FEQE…LKAL). The N-linked (GlcNAc...) asparagine glycan is linked to Asn59. 2 cysteine pairs are disulfide-bonded: Cys251–Cys297 and Cys1128–Cys1139. The rhs/YD-repeats stretch occupies residues 345–2733 (VEPKLDQGSP…PVSQIDPDGQ (2389 aa)). N-linked (GlcNAc...) asparagine glycosylation is present at Asn1149. The carbohydrate-binding module (CBM) stretch occupies residues 1345 to 1494 (NQELVQFLGF…VHVDHVRLSP (150 aa)). The segment at 1575–1715 (HSWVESFSPY…VGIKDVIVME (141 aa)) is lectin carbohydrate-recognition domain (lectin-CRD). The wedge domain stretch occupies residues 2225–2304 (HDKCDQNLIP…SEKMLEQGYP (80 aa)). 2 disulfide bridges follow: Cys2253/Cys2285 and Cys2407/Cys2421. 5 helical membrane-spanning segments follow: residues 2734–2754 (IAVT…LGAA), 2774–2794 (IGLF…AATF), 2805–2825 (MIAG…LGAA), 2844–2864 (WNGL…FVGI), and 2878–2898 (MIYA…GGGM). Positions 3126–3216 (YSPDSDGNQI…ARIAPAALRN (91 aa)) are tox-SGS.

In terms of processing, probably cleaved at the C-terminus. As to expression, female saliva (at protein level). Female salivary gland (at protein level). Not detected in female carcass without salivary glands. Not detected in male tissues.

It localises to the cell membrane. The protein localises to the secreted. Its function is as follows. (Microbial infection) Facilitates, but is not essential for, invasion of salivary glands by Plasmodium gallinaceum. Plays a role in Plasmodium gallinaceum oocyst development in mosquito midgut. Functionally, (Microbial infection) Probably facilitates Zika virus replication in salivary glands. The chain is Salivary gland surface protein 1 from Aedes aegypti (Yellowfever mosquito).